A 213-amino-acid polypeptide reads, in one-letter code: Thymidylate kinase (213 aa).

10 to 17 contributes to the ATP binding site; it reads GLEGAGKT.

Belongs to the thymidylate kinase family.

It catalyses the reaction dTMP + ATP = dTDP + ADP. Functionally, phosphorylation of dTMP to form dTDP in both de novo and salvage pathways of dTTP synthesis. In Escherichia coli O81 (strain ED1a), this protein is Thymidylate kinase.